Reading from the N-terminus, the 548-residue chain is Chaperonin GroEL 2 (548 aa).

ATP contacts are provided by residues T29–P32, D86–T90, G418, N482–A484, and D498.

This sequence belongs to the chaperonin (HSP60) family. As to quaternary structure, forms a cylinder of 14 subunits composed of two heptameric rings stacked back-to-back. Interacts with the co-chaperonin GroES.

The protein resides in the cytoplasm. It carries out the reaction ATP + H2O + a folded polypeptide = ADP + phosphate + an unfolded polypeptide.. Together with its co-chaperonin GroES, plays an essential role in assisting protein folding. The GroEL-GroES system forms a nano-cage that allows encapsulation of the non-native substrate proteins and provides a physical environment optimized to promote and accelerate protein folding. The chain is Chaperonin GroEL 2 from Corynebacterium glutamicum (strain ATCC 13032 / DSM 20300 / JCM 1318 / BCRC 11384 / CCUG 27702 / LMG 3730 / NBRC 12168 / NCIMB 10025 / NRRL B-2784 / 534).